Consider the following 619-residue polypeptide: Zinc finger protein 668 (619 aa).

An N-acetylmethionine modification is found at Met1. Position 10 is a phosphoserine (Ser10). The segment at 22–44 (YKCLFCTKTFPNAPRAARHAATH) adopts a C2H2-type 1 zinc-finger fold. The tract at residues 36–74 (RAARHAATHTPTDCTEEVREAQPKVDTEPKAEEASGDKV) is disordered. Basic and acidic residues predominate over residues 51–71 (EEVREAQPKVDTEPKAEEASG). Residues Lys59, Lys65, and Lys80 each participate in a glycyl lysine isopeptide (Lys-Gly) (interchain with G-Cter in SUMO2) cross-link. 11 C2H2-type zinc fingers span residues 84-106 (YACP…GRSH), 112-134 (FPCP…LASH), 140-162 (FRCT…QRGH), 168-190 (YACP…RRTH), 196-218 (YSCE…ERSH), 224-246 (FLCS…QRIH), 252-274 (YRCP…ERTH), 280-302 (FLCP…QRAH), 308-330 (YRCE…RRVH), 336-358 (FKCL…ALVH), and 364-386 (FRCE…SRMH). Lys154 participates in a covalent cross-link: Glycyl lysine isopeptide (Lys-Gly) (interchain with G-Cter in SUMO2). Position 387 is a phosphoserine (Ser387). Residues 392 to 414 (FHCNACGKSFVVLSSLRKHERTH) form a C2H2-type 13 zinc finger. The disordered stretch occupies residues 491-513 (VGEAPSTLGDAGEVGGEETDEKP). A Glycyl lysine isopeptide (Lys-Gly) (interchain with G-Cter in SUMO2) cross-link involves residue Lys512. 3 consecutive C2H2-type zinc fingers follow at residues 516–538 (FVCR…ERSH), 544–566 (FPCT…SRTH), and 572–594 (YSCS…ERTH).

It belongs to the krueppel C2H2-type zinc-finger protein family.

It localises to the nucleus. May be involved in transcriptional regulation. May play a role in DNA repair process. This Mus musculus (Mouse) protein is Zinc finger protein 668 (Znf668).